A 183-amino-acid chain; its full sequence is MKKIEIDDELYRYIASETRHIGESASDILRRLLKLDAKQPVQPVVVTESVQAPVVKQDADLKPVAPAKNPVREMRELLLSDSYAEKTKSVDRFLQILSTLYSLDSATFTQSAETVHGRTRIYFAGDEKTLLDSGRHTKPRHIPGTPFWVITNSNTERKRTMVQSIMQDMQFPANEIDKVCGTI.

Residues 118-122 form an interaction with DNA region; it reads RTRIY.

This sequence belongs to the SeqA family. As to quaternary structure, homodimer. Polymerizes to form helical filaments.

It is found in the cytoplasm. Negative regulator of replication initiation, which contributes to regulation of DNA replication and ensures that replication initiation occurs exactly once per chromosome per cell cycle. Binds to pairs of hemimethylated GATC sequences in the oriC region, thus preventing assembly of replication proteins and re-initiation at newly replicated origins. Repression is relieved when the region becomes fully methylated. The polypeptide is Negative modulator of initiation of replication (Proteus mirabilis (strain HI4320)).